We begin with the raw amino-acid sequence, 3461 residues long: Reelin (3461 aa).

The N-terminal stretch at 1–26 is a signal peptide; the sequence is MERGCWAPRALVLAVLLLLATLRARA. Positions 27 to 191 constitute a Reelin domain; that stretch reads ATGYYPRFSP…GAPTEATAYS (165 aa). Cysteines 41 and 127 form a disulfide. A glycan (N-linked (GlcNAc...) asparagine) is linked at Asn141. An intrachain disulfide couples Cys155 to Cys179. Asn258, Asn290, and Asn306 each carry an N-linked (GlcNAc...) asparagine glycan. Cys540 and Cys581 are disulfide-bonded. A BNR 1 repeat occupies 593–604; sequence EFSTNHGRSWSL. Cys609 and Cys614 are joined by a disulfide. N-linked (GlcNAc...) asparagine glycosylation occurs at Asn629. The EGF-like 1 domain maps to 671-702; sequence IGPSCLKFCSGRGQCTRHGCKCDPGFSGPACE. 2 disulfide bridges follow: Cys675–Cys685 and Cys692–Cys701. One copy of the BNR 2 repeat lies at 799 to 810; sequence HYSYDNGITWKL. The cysteines at positions 895 and 937 are disulfide-linked. Residues 952-963 form a BNR 3 repeat; the sequence is EYSANHGLTWHL. Intrachain disulfides connect Cys968–Cys975, Cys1034–Cys1044, and Cys1051–Cys1060. Positions 1030–1061 constitute an EGF-like 2 domain; that stretch reads IGQQCPNMCSGHGSCDHGVCRCDQGYQGTECH. One copy of the BNR 4 repeat lies at 1157–1168; it reads QYSNNGGIQWHL. N-linked (GlcNAc...) asparagine glycosylation occurs at Asn1267. Residues 1323–1334 form a BNR 5 repeat; that stretch reads QYSHDAGMSWFL. Disulfide bonds link Cys1339/Cys1348, Cys1413/Cys1423, Cys1417/Cys1428, and Cys1430/Cys1441. The EGF-like 3 domain maps to 1409 to 1442; that stretch reads ISEPCPSYCSGHGDCISGVCFCDLGYTAAQGTCV. A glycan (N-linked (GlcNAc...) asparagine) is linked at Asn1447. Cys1475 and Cys1522 are disulfide-bonded. A BNR 6 repeat occupies 1535-1546; sequence QYSNDNGILWHL. N-linked (GlcNAc...) asparagine glycosylation is present at Asn1600. Cys1633 and Cys1673 are joined by a disulfide. Residues 1686–1697 form a BNR 7 repeat; sequence QYSLNNGKDWQL. A disulfide bridge connects residues Cys1702 and Cys1709. Asn1750 carries N-linked (GlcNAc...) asparagine glycosylation. In terms of domain architecture, EGF-like 4 spans 1765–1796; it reads LASGCPWMCSGRGICDSGRCVCDRGFGGPFCV. The stretch at 1884–1895 is one BNR 8 repeat; the sequence is QFSVSGGVTWHL. Residue Asn1921 is glycosylated (N-linked (GlcNAc...) asparagine). Cys1983 and Cys2030 are disulfide-bonded. The BNR 9 repeat unit spans residues 2043–2054; it reads EFSRDFGATWHL. An intrachain disulfide couples Cys2059 to Cys2070. Zn(2+) is bound by residues His2061 and His2074. Residues 2129-2161 form the EGF-like 5 domain; it reads IGPQCEEMCYGHGSCINGTKCICDPGYSGPTCK. Cystine bridges form between Cys2133-Cys2143, Cys2137-Cys2149, and Cys2151-Cys2160. Residue Asn2145 is glycosylated (N-linked (GlcNAc...) asparagine). Glu2179 contributes to the Zn(2+) binding site. An intrachain disulfide couples Cys2195 to Cys2235. One copy of the BNR 10 repeat lies at 2250–2261; sequence QYSLNGGLSWSL. Glu2264 serves as a coordination point for Zn(2+). Asn2269 and Asn2317 each carry an N-linked (GlcNAc...) asparagine glycan. Intrachain disulfides connect Cys2348-Cys2387, Cys2393-Cys2559, Cys2482-Cys2492, Cys2486-Cys2497, Cys2499-Cys2508, and Cys2544-Cys2584. Zn(2+) is bound by residues Glu2397, Glu2399, and His2460. The stretch at 2399–2410 is one BNR 11 repeat; sequence EYSVDLGLSWHP. One can recognise an EGF-like 6 domain in the interval 2478–2509; sequence IGDGCLDMCSGHGRCVQGSCVCDEQWGGLYCD. Residue Asn2569 is glycosylated (N-linked (GlcNAc...) asparagine). BNR repeat units follow at residues 2598 to 2609 and 2778 to 2789; these read EYSVNGGITWNL and QFSTDFGVSWSY. Cys2794 and Cys2801 are joined by a disulfide. Residues 2853 to 2884 form the EGF-like 7 domain; it reads LGPGCLDNCGGHGDCLKEQCICDPGYSGPNCY. The cysteines at positions 2919 and 2966 are disulfide-linked. N-linked (GlcNAc...) asparagine glycosylation is present at Asn2962. The stretch at 2979 to 2990 is one BNR 14 repeat; the sequence is DFSTDGGITWTL. N-linked (GlcNAc...) asparagine glycans are attached at residues Asn3016 and Asn3073. The BNR 15 repeat unit spans residues 3143–3155; the sequence is EYTKDARSDSWQL. Residues Cys3160 and Cys3170 are joined by a disulfide bond. Residue Asn3185 is glycosylated (N-linked (GlcNAc...) asparagine). The 33-residue stretch at 3228–3260 folds into the EGF-like 8 domain; that stretch reads IGEACPKLCSGHGYCTTGAVCICDESFQGDDCS. Disulfide bonds link Cys3232-Cys3242, Cys3236-Cys3248, Cys3250-Cys3259, and Cys3296-Cys3346. The stretch at 3363–3374 is one BNR 16 repeat; that stretch reads QYSVNNGITWHV. N-linked (GlcNAc...) asparagine glycans are attached at residues Asn3412 and Asn3439.

The protein belongs to the reelin family. As to quaternary structure, oligomer of disulfide-linked homodimers. N-glycosylated and to a lesser extent also O-glycosylated. In terms of tissue distribution, the major isoform 1 is neuron-specific. It is abundantly produced during brain ontogenesis by the Cajal-Retzius cells and other pioneer neurons located in the telencephalic marginal zone and by granule cells of the external granular layer of the cerebellum. Expression is located in deeper layers in the developing hippocampus and olfactory bulb, low levels of expression are also detected in the immature striatum. At early developmental stages, expressed also in hypothalamic differentiation fields, tectum and spinal cord. A moderate to low level of expression occurs in the septal area, striatal fields, habenular nuclei, some thalamic nuclei, particularly the lateral geniculate, the retina and some nuclei of the reticular formation in the central field of the medulla. Very low levels found in liver and kidney. No expression in radial glial cells, cortical plate, Purkinje cells and inferior olivary neurons. The minor isoform 2 is only expressed in non neuronal cells. The minor isoform 3 is found in the same cells as isoform 1, but is almost undetectable in retina and brain stem.

It localises to the secreted. The protein localises to the extracellular space. The protein resides in the extracellular matrix. Functionally, extracellular matrix serine protease secreted by pioneer neurons that plays a role in layering of neurons in the cerebral cortex and cerebellum by coordinating cell positioning during neurodevelopment. Regulates microtubule function in neurons and neuronal migration. Binding to the extracellular domains of lipoprotein receptors VLDLR and LRP8/APOER2 induces tyrosine phosphorylation of DAB1 and modulation of TAU phosphorylation. Affects migration of sympathetic preganglionic neurons in the spinal cord, where it seems to act as a barrier to neuronal migration. Enzymatic activity is important for the modulation of cell adhesion. The sequence is that of Reelin (Reln) from Mus musculus (Mouse).